A 795-amino-acid chain; its full sequence is Myosin light chain kinase 3 (795 aa).

Ser-155 carries the post-translational modification Phosphoserine. Disordered regions lie at residues 236-257 (GPGQVPLPTEAESRLPETASEN) and 305-328 (SSGPLPQPLGPLTPDSDIHSGDAL). 2 positions are modified to phosphoserine: Ser-351 and Ser-432. Positions 367 to 452 (DQIPKGARPF…GPGRTEAGRL (86 aa)) are disordered. A Protein kinase domain is found at 491–746 (VSQHEVLGGG…ATQCLKHEWL (256 aa)). ATP-binding positions include 497–505 (LGGGRFGQV) and Lys-520. The active-site Proton acceptor is the Asp-612.

It belongs to the protein kinase superfamily. CAMK Ser/Thr protein kinase family. It depends on Mg(2+) as a cofactor. Phosphorylated on serine residues. In terms of tissue distribution, restricted to cardiomyocytes (at protein level). Down-regulated in heart after experimental myocardial infarction at the protein level; no significant changes at the mRNA level.

It is found in the cytoplasm. It catalyses the reaction L-seryl-[myosin light chain] + ATP = O-phospho-L-seryl-[myosin light chain] + ADP + H(+). The enzyme catalyses L-threonyl-[myosin light chain] + ATP = O-phospho-L-threonyl-[myosin light chain] + ADP + H(+). In terms of biological role, kinase that phosphorylates MYL2 in vitro. Has been proposed to be calmodulin-dependent, although MYL2 phosphorylation has also been observed in the presence or absence of calmodulin. Promotes sarcomere formation in cardiomyocytes and increases cardiomyocyte contractility. This chain is Myosin light chain kinase 3 (Mylk3), found in Mus musculus (Mouse).